A 441-amino-acid polypeptide reads, in one-letter code: Malate dehydrogenase [NADP], chloroplastic (441 aa).

The transit peptide at 1–51 (MAVAELSPSYKTQLKTCQQLSSSLSTRLSDHRKFSLRLLPRPVSVRGGIRC) directs the protein to the chloroplast. The cysteines at positions 75 and 80 are disulfide-linked. 104–110 (GAAGMIS) contributes to the NADP(+) binding site. Substrate contacts are provided by Arg185 and Arg191. Asn198 contributes to the NADP(+) binding site. Residue Gln205 coordinates NAD(+). 222–224 (VGN) lines the NADP(+) pocket. Positions 224 and 255 each coordinate substrate. His280 functions as the Proton acceptor in the catalytic mechanism. Residues Cys416 and Cys428 are joined by a disulfide bond.

This sequence belongs to the LDH/MDH superfamily. MDH type 2 family. As to quaternary structure, homodimer.

It localises to the plastid. Its subcellular location is the chloroplast. It catalyses the reaction (S)-malate + NADP(+) = oxaloacetate + NADPH + H(+). Its activity is regulated as follows. Chloroplast NADP-MDH is activated upon illumination. In order to be enzymatically active, disulfide bridges on the protein must be reduced by thioredoxin which receives electrons from ferredoxin and the electron transport system of photosynthesis. In terms of biological role, the chloroplastic, NADP-dependent form is essential for the photosynthesis C4 cycle, which allows plants to circumvent the problem of photorespiration. In C4 plants, NADP-MDH activity acts to convert oxaloacetate to malate in chloroplasts of mesophyll cells for transport to the bundle sheath cells. The chain is Malate dehydrogenase [NADP], chloroplastic (MDH1) from Mesembryanthemum crystallinum (Common ice plant).